Here is a 302-residue protein sequence, read N- to C-terminus: Homoserine O-acetyltransferase (302 aa).

Cys-142 (acyl-thioester intermediate) is an active-site residue. Substrate is bound by residues Lys-163 and Ser-192. His-235 functions as the Proton acceptor in the catalytic mechanism. Glu-237 is an active-site residue. A substrate-binding site is contributed by Arg-249.

Belongs to the MetA family.

The protein localises to the cytoplasm. The enzyme catalyses L-homoserine + acetyl-CoA = O-acetyl-L-homoserine + CoA. The protein operates within amino-acid biosynthesis; L-methionine biosynthesis via de novo pathway; O-acetyl-L-homoserine from L-homoserine: step 1/1. In terms of biological role, transfers an acetyl group from acetyl-CoA to L-homoserine, forming acetyl-L-homoserine. This is Homoserine O-acetyltransferase from Clostridium novyi (strain NT).